We begin with the raw amino-acid sequence, 370 residues long: Aminomethyltransferase (370 aa).

This sequence belongs to the GcvT family. In terms of assembly, the glycine cleavage system is composed of four proteins: P, T, L and H.

It catalyses the reaction N(6)-[(R)-S(8)-aminomethyldihydrolipoyl]-L-lysyl-[protein] + (6S)-5,6,7,8-tetrahydrofolate = N(6)-[(R)-dihydrolipoyl]-L-lysyl-[protein] + (6R)-5,10-methylene-5,6,7,8-tetrahydrofolate + NH4(+). Functionally, the glycine cleavage system catalyzes the degradation of glycine. This chain is Aminomethyltransferase, found in Clostridium botulinum (strain ATCC 19397 / Type A).